The following is a 55-amino-acid chain: MMKFLLVLFLITITLITMAYSEEHGCIPPFQPCEGVNSRCCGLYVCFNKICLATP.

Positions 1–21 are cleaved as a signal peptide; it reads MMKFLLVLFLITITLITMAYS. 3 disulfides stabilise this stretch: cysteine 26–cysteine 41, cysteine 33–cysteine 46, and cysteine 40–cysteine 51.

It belongs to the venom Ptu1-like knottin family. As to expression, expressed by the venom gland (posterior main gland) (at protein level).

It localises to the secreted. In terms of biological role, binds reversibly and blocks P/Q-type voltage-gated calcium channels (Cav). This Platymeris rhadamanthus (Red spot assassin bug) protein is U-reduvitoxin-Pr2a.